The sequence spans 262 residues: Small ribosomal subunit protein eS4A (262 aa).

Positions L42 to I105 constitute an S4 RNA-binding domain.

Belongs to the eukaryotic ribosomal protein eS4 family. Component of the small ribosomal subunit (SSU). Mature yeast ribosomes consist of a small (40S) and a large (60S) subunit. The 40S small subunit contains 1 molecule of ribosomal RNA (18S rRNA) and at least 33 different proteins. The large 60S subunit contains 3 rRNA molecules (25S, 5.8S and 5S rRNA) and at least 46 different proteins.

The protein localises to the cytoplasm. Functionally, component of the ribosome, a large ribonucleoprotein complex responsible for the synthesis of proteins in the cell. The small ribosomal subunit (SSU) binds messenger RNAs (mRNAs) and translates the encoded message by selecting cognate aminoacyl-transfer RNA (tRNA) molecules. The large subunit (LSU) contains the ribosomal catalytic site termed the peptidyl transferase center (PTC), which catalyzes the formation of peptide bonds, thereby polymerizing the amino acids delivered by tRNAs into a polypeptide chain. The nascent polypeptides leave the ribosome through a tunnel in the LSU and interact with protein factors that function in enzymatic processing, targeting, and the membrane insertion of nascent chains at the exit of the ribosomal tunnel. This is Small ribosomal subunit protein eS4A (rps401) from Schizosaccharomyces pombe (strain 972 / ATCC 24843) (Fission yeast).